We begin with the raw amino-acid sequence, 132 residues long: Small ribosomal subunit protein uS8 (132 aa).

The protein belongs to the universal ribosomal protein uS8 family. As to quaternary structure, part of the 30S ribosomal subunit. Contacts proteins S5 and S12.

Its function is as follows. One of the primary rRNA binding proteins, it binds directly to 16S rRNA central domain where it helps coordinate assembly of the platform of the 30S subunit. The chain is Small ribosomal subunit protein uS8 from Desulforamulus reducens (strain ATCC BAA-1160 / DSM 100696 / MI-1) (Desulfotomaculum reducens).